We begin with the raw amino-acid sequence, 276 residues long: Exosome complex component Rrp42 (276 aa).

Belongs to the RNase PH family. Rrp42 subfamily. As to quaternary structure, component of the archaeal exosome complex. Forms a hexameric ring-like arrangement composed of 3 Rrp41-Rrp42 heterodimers. The hexameric ring associates with a trimer of Rrp4 and/or Csl4 subunits.

The protein resides in the cytoplasm. Non-catalytic component of the exosome, which is a complex involved in RNA degradation. Contributes to the structuring of the Rrp41 active site. This chain is Exosome complex component Rrp42, found in Aeropyrum pernix (strain ATCC 700893 / DSM 11879 / JCM 9820 / NBRC 100138 / K1).